The chain runs to 90 residues: Small ribosomal subunit protein uS15 (90 aa).

Belongs to the universal ribosomal protein uS15 family. In terms of assembly, part of the 30S ribosomal subunit. Forms a bridge to the 50S subunit in the 70S ribosome, contacting the 23S rRNA.

Functionally, one of the primary rRNA binding proteins, it binds directly to 16S rRNA where it helps nucleate assembly of the platform of the 30S subunit by binding and bridging several RNA helices of the 16S rRNA. In terms of biological role, forms an intersubunit bridge (bridge B4) with the 23S rRNA of the 50S subunit in the ribosome. The protein is Small ribosomal subunit protein uS15 of Helicobacter hepaticus (strain ATCC 51449 / 3B1).